Reading from the N-terminus, the 76-residue chain is MLSKQKMARINELAKKAKSSGLTKEEALEQQQLRREYIQVFRKAMEDMLHSVTVIDPNGNDVTPKKLKESQKSRLH.

Residues 54–76 (VIDPNGNDVTPKKLKESQKSRLH) are disordered. Basic and acidic residues predominate over residues 63–76 (TPKKLKESQKSRLH).

The protein belongs to the UPF0291 family.

It localises to the cytoplasm. This is UPF0291 protein GWCH70_1239 from Geobacillus sp. (strain WCH70).